The sequence spans 409 residues: MAAFLQTNISLNAIKIVPGKYSSLTDHQFRAPYRIRCAAASPGKKRYNIALLPGDGIGPEVISVAKNVLQKAGSLEGLEFDFKEMPVGGAALDLVGVPLPEETFTAAKLSDAILLGAIGGYKWDKNEKHLRPEMALFYLRRDLKVFANLRPATVLPQLVDASTLKKEVAEGVDMMIVRELTGGIYFGEPRGITINENGEEVGVSTEIYAAHEIDRIARVAFETARKRRGKLCSVDKANVLDASILWRKRVTALASEYPDVELSHMYVDNAAMQLIRDPKQFDTIVTNNIFGDILSDEASMITGSIGMLPSASLGESGPGLFEPIHGSAPDIAGQDKANPLATILSAAMLLKYGLGEEKAAKRIEDAVVDALNKGFRTGDIYSPGNKLVGCKEMGEEVLKSVESKVPATV.

The transit peptide at 1–37 (MAAFLQTNISLNAIKIVPGKYSSLTDHQFRAPYRIRC) directs the protein to the chloroplast. S74 is modified (phosphoserine). Residue 118-133 (IGGYKWDKNEKHLRPE) participates in NAD(+) binding. Residues R140, R150, and R178 each contribute to the substrate site. N238 lines the NAD(+) pocket. D268 contributes to the substrate binding site. D268 provides a ligand contact to Mg(2+). N269 provides a ligand contact to NAD(+). Mg(2+) is bound by residues D292 and D296. NAD(+) is bound at residue 322 to 338 (EPIHGSAPDIAGQDKAN).

The protein belongs to the isocitrate and isopropylmalate dehydrogenases family. As to quaternary structure, homodimer. The cofactor is Mg(2+). Mn(2+) serves as cofactor. Highly expressed in seedlings, leaves, stems and roots and, to a lower extent, in flowers, pollen and siliques.

It is found in the plastid. The protein localises to the chloroplast stroma. It catalyses the reaction (2R,3S)-3-isopropylmalate + NAD(+) = 4-methyl-2-oxopentanoate + CO2 + NADH. It functions in the pathway amino-acid biosynthesis; L-leucine biosynthesis; L-leucine from 3-methyl-2-oxobutanoate: step 3/4. It participates in secondary metabolite biosynthesis. Regulated by a thiol-based redox modification; oxidation by CuCl(2) leads to a decreased activity. Involved in both glucosinolate and leucine biosynthesis; catalyzes the oxidative decarboxylation step in both leucine biosynthesis (primary metabolism) and methionine chain elongation of glucosinolates (specialized metabolism). Catalyzes the oxidation of 3-carboxy-2-hydroxy-4-methylpentanoate (3-isopropylmalate, 3-IPM) to 3-carboxy-4-methyl-2-oxopentanoate. The product decarboxylates to 4-methyl-2 oxopentanoate. Required during pollen development and involved in embryo sac development. More active on 3-isopropylmalate and NAD(+) than towards D-malate. This Arabidopsis thaliana (Mouse-ear cress) protein is 3-isopropylmalate dehydrogenase 1, chloroplastic.